Here is a 178-residue protein sequence, read N- to C-terminus: Protein GrpE (178 aa).

This sequence belongs to the GrpE family. Homodimer.

The protein localises to the cytoplasm. Participates actively in the response to hyperosmotic and heat shock by preventing the aggregation of stress-denatured proteins, in association with DnaK and GrpE. It is the nucleotide exchange factor for DnaK and may function as a thermosensor. Unfolded proteins bind initially to DnaJ; upon interaction with the DnaJ-bound protein, DnaK hydrolyzes its bound ATP, resulting in the formation of a stable complex. GrpE releases ADP from DnaK; ATP binding to DnaK triggers the release of the substrate protein, thus completing the reaction cycle. Several rounds of ATP-dependent interactions between DnaJ, DnaK and GrpE are required for fully efficient folding. This chain is Protein GrpE, found in Rickettsia typhi (strain ATCC VR-144 / Wilmington).